The sequence spans 139 residues: Cytochrome c-type biogenesis protein CcmE (139 aa).

Residues 1–7 are Cytoplasmic-facing; it reads MTKRQNR. A helical; Signal-anchor for type II membrane protein transmembrane segment spans residues 8–28; that stretch reads MTLVALLVIGVSLTGYLGLKA. Over 29–139 the chain is Periplasmic; it reads FNENLLYFFS…ADALEKAKNK (111 aa). Histidine 120 and tyrosine 124 together coordinate heme.

This sequence belongs to the CcmE/CycJ family.

It localises to the cell inner membrane. In terms of biological role, heme chaperone required for the biogenesis of c-type cytochromes. Transiently binds heme delivered by CcmC and transfers the heme to apo-cytochromes in a process facilitated by CcmF and CcmH. This Ruthia magnifica subsp. Calyptogena magnifica protein is Cytochrome c-type biogenesis protein CcmE.